A 346-amino-acid chain; its full sequence is tRNA N6-adenosine threonylcarbamoyltransferase (346 aa).

Residues His-111 and His-115 each contribute to the Fe cation site. Substrate-binding positions include 134-138 (LVSGG), Asp-167, Gly-180, and Asn-277. Asp-305 provides a ligand contact to Fe cation.

It belongs to the KAE1 / TsaD family. The cofactor is Fe(2+).

It localises to the cytoplasm. The catalysed reaction is L-threonylcarbamoyladenylate + adenosine(37) in tRNA = N(6)-L-threonylcarbamoyladenosine(37) in tRNA + AMP + H(+). Required for the formation of a threonylcarbamoyl group on adenosine at position 37 (t(6)A37) in tRNAs that read codons beginning with adenine. Is involved in the transfer of the threonylcarbamoyl moiety of threonylcarbamoyl-AMP (TC-AMP) to the N6 group of A37, together with TsaE and TsaB. TsaD likely plays a direct catalytic role in this reaction. The chain is tRNA N6-adenosine threonylcarbamoyltransferase from Bordetella pertussis (strain Tohama I / ATCC BAA-589 / NCTC 13251).